The primary structure comprises 472 residues: Proline--tRNA ligase (472 aa).

This sequence belongs to the class-II aminoacyl-tRNA synthetase family. ProS type 3 subfamily. As to quaternary structure, homodimer.

Its subcellular location is the cytoplasm. The enzyme catalyses tRNA(Pro) + L-proline + ATP = L-prolyl-tRNA(Pro) + AMP + diphosphate. Its function is as follows. Catalyzes the attachment of proline to tRNA(Pro) in a two-step reaction: proline is first activated by ATP to form Pro-AMP and then transferred to the acceptor end of tRNA(Pro). The sequence is that of Proline--tRNA ligase from Ureaplasma urealyticum serovar 10 (strain ATCC 33699 / Western).